A 63-amino-acid chain; its full sequence is UPF0337 protein RA1131 (63 aa).

Residues 1 to 63 (MGSAKDKVAG…DAVKGAVDKT (63 aa)) form a disordered region. Residues 34-49 (AKGAAQEAKGGAQQAK) are compositionally biased toward low complexity. The segment covering 51-63 (KLKDAVKGAVDKT) has biased composition (basic and acidic residues).

This sequence belongs to the UPF0337 (CsbD) family.

The chain is UPF0337 protein RA1131 from Rhizobium meliloti (strain 1021) (Ensifer meliloti).